The primary structure comprises 106 residues: Large ribosomal subunit protein uL23 (106 aa).

The protein belongs to the universal ribosomal protein uL23 family. Part of the 50S ribosomal subunit. Contacts protein L29, and trigger factor when it is bound to the ribosome.

Its function is as follows. One of the early assembly proteins it binds 23S rRNA. One of the proteins that surrounds the polypeptide exit tunnel on the outside of the ribosome. Forms the main docking site for trigger factor binding to the ribosome. In Neisseria meningitidis serogroup A / serotype 4A (strain DSM 15465 / Z2491), this protein is Large ribosomal subunit protein uL23.